The chain runs to 164 residues: Putative pre-16S rRNA nuclease (164 aa).

Belongs to the YqgF nuclease family.

It is found in the cytoplasm. Functionally, could be a nuclease involved in processing of the 5'-end of pre-16S rRNA. The polypeptide is Putative pre-16S rRNA nuclease (Caulobacter sp. (strain K31)).